The primary structure comprises 119 residues: Large ribosomal subunit protein bL20 (119 aa).

Belongs to the bacterial ribosomal protein bL20 family.

Functionally, binds directly to 23S ribosomal RNA and is necessary for the in vitro assembly process of the 50S ribosomal subunit. It is not involved in the protein synthesizing functions of that subunit. This is Large ribosomal subunit protein bL20 from Rhodopseudomonas palustris (strain BisB18).